Reading from the N-terminus, the 209-residue chain is MEQQKIPQATAKRLPLYYRFIQNLSLSGKQRVSSAELSEAVKVDSATIRRDFSYFGALGKKGYGYNVNYLLSFFRETLDQDDITRVALIGVGNLGTAFLHYNFTKNNNTKIEMAFDVSEEKVGTEIGGIPVYHLDELEERLSTDIQVAILTVPATVAQSVADRLAETNVHGILNFTPARLNVSENIRIHHIDLAVELQTLVYFLKNYPQ.

The H-T-H motif DNA-binding region spans 16–55 (LYYRFIQNLSLSGKQRVSSAELSEAVKVDSATIRRDFSYF). 90 to 95 (GVGNLG) contributes to the NAD(+) binding site.

It belongs to the transcriptional regulatory Rex family. As to quaternary structure, homodimer.

It is found in the cytoplasm. In terms of biological role, modulates transcription in response to changes in cellular NADH/NAD(+) redox state. The polypeptide is Redox-sensing transcriptional repressor Rex (Bacillus cereus (strain ATCC 10987 / NRS 248)).